The primary structure comprises 334 residues: DNA-directed RNA polymerase subunit alpha (334 aa).

Residues 1-234 (MQRSVHELLT…QQLAVFVDFD (234 aa)) form an alpha N-terminal domain (alpha-NTD) region. An alpha C-terminal domain (alpha-CTD) region spans residues 248-334 (IDPILLRPVD…LRGDDRVLGG (87 aa)).

The protein belongs to the RNA polymerase alpha chain family. As to quaternary structure, homodimer. The RNAP catalytic core consists of 2 alpha, 1 beta, 1 beta' and 1 omega subunit. When a sigma factor is associated with the core the holoenzyme is formed, which can initiate transcription.

It catalyses the reaction RNA(n) + a ribonucleoside 5'-triphosphate = RNA(n+1) + diphosphate. Its function is as follows. DNA-dependent RNA polymerase catalyzes the transcription of DNA into RNA using the four ribonucleoside triphosphates as substrates. In Marinobacter nauticus (strain ATCC 700491 / DSM 11845 / VT8) (Marinobacter aquaeolei), this protein is DNA-directed RNA polymerase subunit alpha.